The sequence spans 94 residues: Protein RnfH (94 aa).

It belongs to the UPF0125 (RnfH) family.

This chain is Protein RnfH, found in Sodalis glossinidius (strain morsitans).